A 253-amino-acid polypeptide reads, in one-letter code: MRGKGVPVRLDKVSFSYGEAPLTFDVAFAAAEITAIMGPSGSGKSTLLNLVAGFETPQSGGVLIGGVDVGAAPPAARPVSMVFQENNLFAHLSVEQNVGLGRSPSLRLTEVDREAIDGALARTGLGGKEKRLPRELSGGERQRVALARVLVRDRPVLLLDEPFASLGPALRDDMLDLVAGVHAERGMTVLFVTHQPQDARRIGRNVVFLDNGTVAATGSADDFFAGAGPEAFRRYIGASAGNAVSQDIARKRT.

The 229-residue stretch at 8-236 (VRLDKVSFSY…AGPEAFRRYI (229 aa)) folds into the ABC transporter domain. 38-45 (GPSGSGKS) is a binding site for ATP.

It belongs to the ABC transporter superfamily. Thiamine importer (TC 3.A.1.19.1) family. As to quaternary structure, the complex is composed of two ATP-binding proteins (ThiQ), two transmembrane proteins (ThiP) and a solute-binding protein (ThiB).

The protein localises to the cell inner membrane. The catalysed reaction is thiamine(out) + ATP + H2O = thiamine(in) + ADP + phosphate + H(+). Functionally, part of the ABC transporter complex ThiBPQ involved in thiamine import. Responsible for energy coupling to the transport system. This chain is Thiamine import ATP-binding protein ThiQ, found in Mesorhizobium japonicum (strain LMG 29417 / CECT 9101 / MAFF 303099) (Mesorhizobium loti (strain MAFF 303099)).